We begin with the raw amino-acid sequence, 285 residues long: Bifunctional protein FolD (285 aa).

Residues 166-168 (GRS), S191, and T232 each bind NADP(+).

This sequence belongs to the tetrahydrofolate dehydrogenase/cyclohydrolase family. In terms of assembly, homodimer.

It carries out the reaction (6R)-5,10-methylene-5,6,7,8-tetrahydrofolate + NADP(+) = (6R)-5,10-methenyltetrahydrofolate + NADPH. It catalyses the reaction (6R)-5,10-methenyltetrahydrofolate + H2O = (6R)-10-formyltetrahydrofolate + H(+). The protein operates within one-carbon metabolism; tetrahydrofolate interconversion. Its function is as follows. Catalyzes the oxidation of 5,10-methylenetetrahydrofolate to 5,10-methenyltetrahydrofolate and then the hydrolysis of 5,10-methenyltetrahydrofolate to 10-formyltetrahydrofolate. The protein is Bifunctional protein FolD of Chloroflexus aurantiacus (strain ATCC 29366 / DSM 635 / J-10-fl).